Reading from the N-terminus, the 195-residue chain is Thymidine kinase (195 aa).

ATP is bound by residues 8–15 (GLMGSGKS) and 86–89 (DESQ). The active-site Proton acceptor is E87. Residues C146, C151, C184, and H187 each contribute to the Zn(2+) site.

This sequence belongs to the thymidine kinase family. Homotetramer.

It localises to the cytoplasm. The catalysed reaction is thymidine + ATP = dTMP + ADP + H(+). The protein is Thymidine kinase (tdk) of Bacillus subtilis subsp. natto.